Consider the following 132-residue polypeptide: Small ribosomal subunit protein uS8 (132 aa).

The protein belongs to the universal ribosomal protein uS8 family. Part of the 30S ribosomal subunit. Contacts proteins S5 and S12.

Its function is as follows. One of the primary rRNA binding proteins, it binds directly to 16S rRNA central domain where it helps coordinate assembly of the platform of the 30S subunit. The chain is Small ribosomal subunit protein uS8 from Streptococcus equi subsp. equi (strain 4047).